The chain runs to 414 residues: MTIKTLALQCRDAAHVLSQLSSSAKQALLEAMAAALEHDGAVILAANARDLEAAREKGVGTAMLDRLALDTKRLDGIAAALREVAQLPDPVGQITREDVRPNGIVVQKVRVPLGVIAMIYEARPNVTADAAALCIKAGNGVILRGGSEAIHSNTAIARALQSALREANVPEAALTLVEDLRRETMLELLQLSDIVDLAIPRGGEGLIRFVAEHARVPVIKHYKGVCHLFVDASADVDLAVRLLVDGKASRPSACNSLETLLVHADIAERFLPAAAHALRERHVELRGDAATRALLPDIAAASDEDYAAEFLDLILAIRVVPDLDTALTHIRQYGSDHTEVIATQDTANAEQFVQSLRSAVVMVNASSRFSDGGELGLGAEIGISTTRLHSYGPMGLEALTVERFVVRGEGQVRH.

Belongs to the gamma-glutamyl phosphate reductase family.

It is found in the cytoplasm. The catalysed reaction is L-glutamate 5-semialdehyde + phosphate + NADP(+) = L-glutamyl 5-phosphate + NADPH + H(+). The protein operates within amino-acid biosynthesis; L-proline biosynthesis; L-glutamate 5-semialdehyde from L-glutamate: step 2/2. Its function is as follows. Catalyzes the NADPH-dependent reduction of L-glutamate 5-phosphate into L-glutamate 5-semialdehyde and phosphate. The product spontaneously undergoes cyclization to form 1-pyrroline-5-carboxylate. In Xanthomonas campestris pv. campestris (strain B100), this protein is Gamma-glutamyl phosphate reductase.